We begin with the raw amino-acid sequence, 82 residues long: Cytochrome b559 subunit alpha (82 aa).

A helical membrane pass occupies residues 21–35 (VIHSITIPALFIAGW). Residue histidine 23 coordinates heme.

This sequence belongs to the PsbE/PsbF family. In terms of assembly, heterodimer of an alpha subunit and a beta subunit. PSII is composed of 1 copy each of membrane proteins PsbA, PsbB, PsbC, PsbD, PsbE, PsbF, PsbH, PsbI, PsbJ, PsbK, PsbL, PsbM, PsbT, PsbX, PsbY, PsbZ, Psb30/Ycf12, peripheral proteins PsbO, CyanoQ (PsbQ), PsbU, PsbV and a large number of cofactors. It forms dimeric complexes. It depends on heme b as a cofactor.

It is found in the cellular thylakoid membrane. Functionally, this b-type cytochrome is tightly associated with the reaction center of photosystem II (PSII). PSII is a light-driven water:plastoquinone oxidoreductase that uses light energy to abstract electrons from H(2)O, generating O(2) and a proton gradient subsequently used for ATP formation. It consists of a core antenna complex that captures photons, and an electron transfer chain that converts photonic excitation into a charge separation. This Nostoc punctiforme (strain ATCC 29133 / PCC 73102) protein is Cytochrome b559 subunit alpha.